Reading from the N-terminus, the 173-residue chain is uncharacterized protein (173 aa).

This is an uncharacterized protein from Mycobacterium tuberculosis (strain CDC 1551 / Oshkosh).